The sequence spans 372 residues: Molybdopterin synthase catalytic subunit (372 aa).

Substrate contacts are provided by residues 101-102 (HR), Lys-117, and 124-126 (KKE).

The protein belongs to the MoaE family. MOCS2B subfamily. Heterotetramer; composed of 2 small (Mocs2A) and 2 large (Mocs2B) subunits.

The protein localises to the cytoplasm. It catalyses the reaction 2 [molybdopterin-synthase sulfur-carrier protein]-C-terminal-Gly-aminoethanethioate + cyclic pyranopterin phosphate + H2O = molybdopterin + 2 [molybdopterin-synthase sulfur-carrier protein]-C-terminal Gly-Gly + 2 H(+). It participates in cofactor biosynthesis; molybdopterin biosynthesis. Its function is as follows. Catalytic subunit of the molybdopterin synthase complex, a complex that catalyzes the conversion of precursor Z into molybdopterin. Acts by mediating the incorporation of 2 sulfur atoms from thiocarboxylated Mocs2A into precursor Z to generate a dithiolene group. The protein is Molybdopterin synthase catalytic subunit of Drosophila willistoni (Fruit fly).